We begin with the raw amino-acid sequence, 120 residues long: Large ribosomal subunit protein uL14 (120 aa).

The protein belongs to the universal ribosomal protein uL14 family. In terms of assembly, part of the 50S ribosomal subunit. Forms a cluster with proteins L3 and L19. In the 70S ribosome, L14 and L19 interact and together make contacts with the 16S rRNA in bridges B5 and B8.

Binds to 23S rRNA. Forms part of two intersubunit bridges in the 70S ribosome. This chain is Large ribosomal subunit protein uL14, found in Dictyoglomus thermophilum (strain ATCC 35947 / DSM 3960 / H-6-12).